We begin with the raw amino-acid sequence, 224 residues long: Agamous-like MADS-box protein AGL9 homolog (224 aa).

The region spanning 3-57 (RGRVELKRIEGKINRQVTFAKRRNGLLKKAYELSVLCDAEVALIIFSNRGKLYEF) is the MADS-box domain. Positions 89–179 (EISSQQEYLK…KQRLMEGSQL (91 aa)) constitute a K-box domain.

Flower specific.

It is found in the nucleus. Probable transcription factor active in inflorescence development and floral organogenesis. This is Agamous-like MADS-box protein AGL9 homolog (TDR5) from Solanum lycopersicum (Tomato).